Consider the following 78-residue polypeptide: ATP synthase subunit c (78 aa).

2 consecutive transmembrane segments (helical) span residues L16–L36 and M57–V77.

The protein belongs to the ATPase C chain family. In terms of assembly, F-type ATPases have 2 components, F(1) - the catalytic core - and F(0) - the membrane proton channel. F(1) has five subunits: alpha(3), beta(3), gamma(1), delta(1), epsilon(1). F(0) has three main subunits: a(1), b(2) and c(10-14). The alpha and beta chains form an alternating ring which encloses part of the gamma chain. F(1) is attached to F(0) by a central stalk formed by the gamma and epsilon chains, while a peripheral stalk is formed by the delta and b chains.

It is found in the cell inner membrane. Its function is as follows. F(1)F(0) ATP synthase produces ATP from ADP in the presence of a proton or sodium gradient. F-type ATPases consist of two structural domains, F(1) containing the extramembraneous catalytic core and F(0) containing the membrane proton channel, linked together by a central stalk and a peripheral stalk. During catalysis, ATP synthesis in the catalytic domain of F(1) is coupled via a rotary mechanism of the central stalk subunits to proton translocation. Functionally, key component of the F(0) channel; it plays a direct role in translocation across the membrane. A homomeric c-ring of between 10-14 subunits forms the central stalk rotor element with the F(1) delta and epsilon subunits. The chain is ATP synthase subunit c from Hyphomonas neptunium (strain ATCC 15444).